The chain runs to 198 residues: Ribonuclease HII (198 aa).

The RNase H type-2 domain maps to 10–198 (HLVAGVDEVG…PVKRALGLVS (189 aa)). 3 residues coordinate a divalent metal cation: Asp-16, Glu-17, and Asp-108.

This sequence belongs to the RNase HII family. The cofactor is Mn(2+). It depends on Mg(2+) as a cofactor.

The protein resides in the cytoplasm. It catalyses the reaction Endonucleolytic cleavage to 5'-phosphomonoester.. Its function is as follows. Endonuclease that specifically degrades the RNA of RNA-DNA hybrids. The protein is Ribonuclease HII of Salmonella paratyphi A (strain AKU_12601).